The following is a 217-amino-acid chain: Protein-L-isoaspartate O-methyltransferase (217 aa).

The active site involves Ser-62.

It belongs to the methyltransferase superfamily. L-isoaspartyl/D-aspartyl protein methyltransferase family.

It is found in the cytoplasm. The catalysed reaction is [protein]-L-isoaspartate + S-adenosyl-L-methionine = [protein]-L-isoaspartate alpha-methyl ester + S-adenosyl-L-homocysteine. Its function is as follows. Catalyzes the methyl esterification of L-isoaspartyl residues in peptides and proteins that result from spontaneous decomposition of normal L-aspartyl and L-asparaginyl residues. It plays a role in the repair and/or degradation of damaged proteins. The protein is Protein-L-isoaspartate O-methyltransferase of Trichlorobacter lovleyi (strain ATCC BAA-1151 / DSM 17278 / SZ) (Geobacter lovleyi).